The primary structure comprises 95 residues: Small ribosomal subunit protein uS15 (95 aa).

Belongs to the universal ribosomal protein uS15 family. Part of the 30S ribosomal subunit. Forms a bridge to the 50S subunit in the 70S ribosome, contacting the 23S rRNA.

Its function is as follows. One of the primary rRNA binding proteins, it binds directly to 16S rRNA where it helps nucleate assembly of the platform of the 30S subunit by binding and bridging several RNA helices of the 16S rRNA. Functionally, forms an intersubunit bridge (bridge B4) with the 23S rRNA of the 50S subunit in the ribosome. This Sulfurihydrogenibium sp. (strain YO3AOP1) protein is Small ribosomal subunit protein uS15.